Consider the following 154-residue polypeptide: Large ribosomal subunit protein uL22 (154 aa).

This sequence belongs to the universal ribosomal protein uL22 family. In terms of assembly, part of the 50S ribosomal subunit.

Its function is as follows. This protein binds specifically to 23S rRNA. It makes multiple contacts with different domains of the 23S rRNA in the assembled 50S subunit and ribosome. In terms of biological role, the globular domain of the protein is located near the polypeptide exit tunnel on the outside of the subunit, while an extended beta-hairpin is found that lines the wall of the exit tunnel in the center of the 70S ribosome. This chain is Large ribosomal subunit protein uL22, found in Methanoregula boonei (strain DSM 21154 / JCM 14090 / 6A8).